Consider the following 932-residue polypeptide: Glycine dehydrogenase (decarboxylating) (932 aa).

Lysine 685 carries the post-translational modification N6-(pyridoxal phosphate)lysine.

The protein belongs to the GcvP family. As to quaternary structure, the glycine cleavage system is composed of four proteins: P, T, L and H. It depends on pyridoxal 5'-phosphate as a cofactor.

The enzyme catalyses N(6)-[(R)-lipoyl]-L-lysyl-[glycine-cleavage complex H protein] + glycine + H(+) = N(6)-[(R)-S(8)-aminomethyldihydrolipoyl]-L-lysyl-[glycine-cleavage complex H protein] + CO2. In terms of biological role, the glycine cleavage system catalyzes the degradation of glycine. The P protein binds the alpha-amino group of glycine through its pyridoxal phosphate cofactor; CO(2) is released and the remaining methylamine moiety is then transferred to the lipoamide cofactor of the H protein. This is Glycine dehydrogenase (decarboxylating) from Brucella abortus (strain S19).